The sequence spans 228 residues: Small ribosomal subunit protein uS7m (228 aa).

The transit peptide at 1–33 (MAASVRHLLKPWTPSLCLMRWSRYNPYYLDPEP) directs the protein to the mitochondrion.

This sequence belongs to the universal ribosomal protein uS7 family. In terms of assembly, component of the mitochondrial ribosome small subunit (28S) which comprises a 12S rRNA and about 30 distinct proteins.

Its subcellular location is the mitochondrion. This is Small ribosomal subunit protein uS7m (mrps7) from Danio rerio (Zebrafish).